Reading from the N-terminus, the 115-residue chain is Histidine decarboxylase proenzyme (115 aa).

Pyruvic acid (Ser) is present on Ser83.

The proenzyme is a hexamer of identical pi chains; each pi chain monomer is cleaved to form a small (or beta) chain and a large (or alpha) chain by non-hydrolytic self-catalysis. Requires pyruvate as cofactor.

The enzyme catalyses L-histidine + H(+) = histamine + CO2. In Lentilactobacillus buchneri (Lactobacillus buchneri), this protein is Histidine decarboxylase proenzyme.